Consider the following 200-residue polypeptide: Potassium-transporting ATPase KdpC subunit (200 aa).

A helical transmembrane segment spans residues 7 to 27; that stretch reads PALVMIVLFTILTGLIYPLAM.

This sequence belongs to the KdpC family. As to quaternary structure, the system is composed of three essential subunits: KdpA, KdpB and KdpC.

Its subcellular location is the cell inner membrane. Its function is as follows. Part of the high-affinity ATP-driven potassium transport (or Kdp) system, which catalyzes the hydrolysis of ATP coupled with the electrogenic transport of potassium into the cytoplasm. This subunit acts as a catalytic chaperone that increases the ATP-binding affinity of the ATP-hydrolyzing subunit KdpB by the formation of a transient KdpB/KdpC/ATP ternary complex. The sequence is that of Potassium-transporting ATPase KdpC subunit from Methylocella silvestris (strain DSM 15510 / CIP 108128 / LMG 27833 / NCIMB 13906 / BL2).